Consider the following 249-residue polypeptide: UPF0524 protein C3orf70 homolog B (249 aa).

The disordered stretch occupies residues 174–230; sequence GPKMGHCSSPSTSEDSGINALGGHFLESCEEESEEEDELSTDGHSSPGSLWDQDECT. Residues 201 to 213 show a composition bias toward acidic residues; sequence SCEEESEEEDELS.

The protein belongs to the UPF0524 family.

Functionally, plays a role in neuronal and neurobehavioral development. Required for normal expression of the postmitotic and mature neuron markers elavl3 and eno2 and neurobehaviors related to circadian rhythm and altered light-dark conditions. This chain is UPF0524 protein C3orf70 homolog B, found in Danio rerio (Zebrafish).